Consider the following 278-residue polypeptide: Urease accessory protein UreD (278 aa).

This sequence belongs to the UreD family. As to quaternary structure, ureD, UreF and UreG form a complex that acts as a GTP-hydrolysis-dependent molecular chaperone, activating the urease apoprotein by helping to assemble the nickel containing metallocenter of UreC. The UreE protein probably delivers the nickel.

It localises to the cytoplasm. Functionally, required for maturation of urease via the functional incorporation of the urease nickel metallocenter. The protein is Urease accessory protein UreD of Escherichia coli.